The sequence spans 366 residues: Ferrochelatase (366 aa).

Residues His210 and Glu293 each coordinate Fe cation.

This sequence belongs to the ferrochelatase family.

The protein resides in the cytoplasm. It catalyses the reaction heme b + 2 H(+) = protoporphyrin IX + Fe(2+). It functions in the pathway porphyrin-containing compound metabolism; protoheme biosynthesis; protoheme from protoporphyrin-IX: step 1/1. Catalyzes the ferrous insertion into protoporphyrin IX. This chain is Ferrochelatase, found in Leptospira borgpetersenii serovar Hardjo-bovis (strain L550).